The primary structure comprises 281 residues: Probable endonuclease 4 (281 aa).

His69, His109, Glu145, Asp179, His182, His216, Asp229, His231, and Glu261 together coordinate Zn(2+).

Belongs to the AP endonuclease 2 family. It depends on Zn(2+) as a cofactor.

It catalyses the reaction Endonucleolytic cleavage to 5'-phosphooligonucleotide end-products.. In terms of biological role, endonuclease IV plays a role in DNA repair. It cleaves phosphodiester bonds at apurinic or apyrimidinic (AP) sites, generating a 3'-hydroxyl group and a 5'-terminal sugar phosphate. This is Probable endonuclease 4 from Parabacteroides distasonis (strain ATCC 8503 / DSM 20701 / CIP 104284 / JCM 5825 / NCTC 11152).